The following is a 452-amino-acid chain: tRNA modification GTPase MnmE (452 aa).

Residues R22, E79, and K119 each coordinate (6S)-5-formyl-5,6,7,8-tetrahydrofolate. The TrmE-type G domain maps to G215–G375. N225 contributes to the K(+) binding site. Residues N225–S230, T244–T250, D269–G272, and N333–D336 contribute to the GTP site. S229 serves as a coordination point for Mg(2+). K(+) contacts are provided by T244, I246, and T249. Mg(2+) is bound at residue T250. K452 contacts (6S)-5-formyl-5,6,7,8-tetrahydrofolate.

Belongs to the TRAFAC class TrmE-Era-EngA-EngB-Septin-like GTPase superfamily. TrmE GTPase family. In terms of assembly, homodimer. Heterotetramer of two MnmE and two MnmG subunits. It depends on K(+) as a cofactor.

The protein resides in the cytoplasm. In terms of biological role, exhibits a very high intrinsic GTPase hydrolysis rate. Involved in the addition of a carboxymethylaminomethyl (cmnm) group at the wobble position (U34) of certain tRNAs, forming tRNA-cmnm(5)s(2)U34. This Histophilus somni (strain 2336) (Haemophilus somnus) protein is tRNA modification GTPase MnmE.